We begin with the raw amino-acid sequence, 517 residues long: Protein disulfide-isomerase A5 (517 aa).

Residues 1–21 (MARAWGLLLAIGVVLPTWLSS) form the signal peptide. 4 disulfides stabilise this stretch: Cys-83–Cys-92, Cys-180–Cys-183, Cys-303–Cys-306, and Cys-424–Cys-427. 3 Thioredoxin domains span residues 132–259 (FLKD…NPLP), 268–382 (PWAD…NPEA), and 376–504 (WMQN…TLRE). Residues 514 to 517 (REEL) carry the Prevents secretion from ER motif.

This sequence belongs to the protein disulfide isomerase family. Interacts with CALR (via P-domain).

It is found in the endoplasmic reticulum lumen. It catalyses the reaction Catalyzes the rearrangement of -S-S- bonds in proteins.. This Mus musculus (Mouse) protein is Protein disulfide-isomerase A5 (Pdia5).